A 151-amino-acid polypeptide reads, in one-letter code: Protein ripply1 (151 aa).

A WRPW motif motif is present at residues 57-60; that stretch reads WRPW. The interval 96 to 131 is ripply homology domain; sequence HPVRLFWPKSRSFDYLYSAGEILLQNFPVQATINLY. The interval 130 to 151 is disordered; it reads LYEDSDSEEEEEDEEQEDEEEK. Positions 132–151 are enriched in acidic residues; the sequence is EDSDSEEEEEDEEQEDEEEK.

Belongs to the ripply family.

Its subcellular location is the nucleus. In terms of biological role, plays a role in somitogenesis. Essential for transcriptional repression of the segmental patterning genes, thus terminating the segmentation program in the presomitic mesoderm, and also required for the maintenance of rostrocaudal polarity in somites. The sequence is that of Protein ripply1 from Homo sapiens (Human).